The sequence spans 152 residues: Transcriptional regulator MraZ (152 aa).

SpoVT-AbrB domains are found at residues 5-52 and 81-124; these read ATLV…PLPE and ASEC…DETT.

This sequence belongs to the MraZ family. In terms of assembly, forms oligomers.

The protein resides in the cytoplasm. The protein localises to the nucleoid. Functionally, negatively regulates its own expression and that of the subsequent genes in the proximal part of the division and cell wall (dcw) gene cluster. Acts by binding directly to DNA. May also regulate the expression of genes outside the dcw cluster. The protein is Transcriptional regulator MraZ of Salmonella paratyphi A (strain ATCC 9150 / SARB42).